The following is a 299-amino-acid chain: MIKMIESYLKAGKIVSKVRREAAGIIRDGLPIIELVNYVEDRIIEEGGRPAFPCNVSVNEVTAHYTSPPGDDSVIGDGDLVKLDLGAHVDGFIADTAITVPVGDVDDKCHQMMDAAREALENAISTIRAGVEVGEIGRVIEETIHSHGMNPVSNLTGHSMERWILHSGLSIPNINERNTHQLEEGDVLAIEPFATDGVGLVTDMPQTYIFRFLRERPLRLVHARRVLGKIREEYHALPFAQRWLEEYFDAKRLNASMRMLIQSRAIYPYHVLREKSGAMVAQWEHTVIVEEDGCTVITE.

Substrate is bound at residue His-64. Asp-84, Asp-95, and His-158 together coordinate a divalent metal cation. Residue His-166 coordinates substrate. Positions 191 and 284 each coordinate a divalent metal cation.

This sequence belongs to the peptidase M24A family. Methionine aminopeptidase archaeal type 2 subfamily. In terms of assembly, monomer. Co(2+) is required as a cofactor. It depends on Zn(2+) as a cofactor. Mn(2+) serves as cofactor. The cofactor is Fe(2+).

The enzyme catalyses Release of N-terminal amino acids, preferentially methionine, from peptides and arylamides.. Removes the N-terminal methionine from nascent proteins. The N-terminal methionine is often cleaved when the second residue in the primary sequence is small and uncharged (Met-Ala-, Cys, Gly, Pro, Ser, Thr, or Val). The protein is Methionine aminopeptidase of Methanothermobacter thermautotrophicus (strain ATCC 29096 / DSM 1053 / JCM 10044 / NBRC 100330 / Delta H) (Methanobacterium thermoautotrophicum).